An 828-amino-acid chain; its full sequence is Protein ELFN1 (828 aa).

The N-terminal stretch at M1–A25 is a signal peptide. Over Q26 to Y418 the chain is Extracellular. 5 LRR repeats span residues T61–R82, N85–G106, N109–G130, K133–E154, and N157–G178. 3 N-linked (GlcNAc...) asparagine glycosylation sites follow: N85, N90, and N122. Residues N190–E253 enclose the LRRCT domain. N210 carries N-linked (GlcNAc...) asparagine glycosylation. The interval A258 to E293 is disordered. A compositionally biased stretch (pro residues) spans H275–S285. Positions Q312 to L399 constitute a Fibronectin type-III domain. The N-linked (GlcNAc...) asparagine glycan is linked to N376. A helical transmembrane segment spans residues I419 to C439. Topologically, residues L440–S828 are cytoplasmic. A phosphoserine mark is found at S460 and S646. 2 disordered regions span residues H627–S674 and K697–G731. Over residues R638–T652 the composition is skewed to low complexity. A compositionally biased stretch (basic and acidic residues) spans K697–H706. The segment covering A714–T725 has biased composition (pro residues).

Interacts with PPP1CA. In terms of tissue distribution, selectively expressed in perialvear somatostatin (Sst)-containing interneurons.

The protein resides in the membrane. It is found in the cell projection. Its subcellular location is the dendrite. Its function is as follows. Postsynaptic protein that regulates circuit dynamics in the central nervous system by modulating the temporal dynamics of interneuron recruitment. Specifically present in excitatory synapses onto oriens-lacunosum molecular (OLM) interneurons and acts as a regulator of presynaptic release probability to direct the formation of highly facilitating pyramidal-OLM synapses. Inhibits phosphatase activity of protein phosphatase 1 (PP1) complexes. The chain is Protein ELFN1 (Elfn1) from Mus musculus (Mouse).